We begin with the raw amino-acid sequence, 392 residues long: Xylose operon regulatory protein (392 aa).

One can recognise an HTH araC/xylS-type domain in the interval 288 to 386; that stretch reads IQAMHYIRNH…DTTPKEYRDV (99 aa). 2 consecutive DNA-binding regions (H-T-H motif) follow at residues 305–326 and 353–376; these read DQVL…KEEV and INEI…KKAY.

Its function is as follows. Regulatory protein for the xylBAFGHR operon. This chain is Xylose operon regulatory protein (xylR), found in Escherichia coli O157:H7.